Consider the following 393-residue polypeptide: Ferrochelatase, mitochondrial (393 aa).

Residues 1–31 constitute a mitochondrion transit peptide; that stretch reads MLSRTIRTQGSFLRRSQLTITRSFSVTFNMQ. The active site involves aspartate 351.

It belongs to the ferrochelatase family. The leader peptide may be processed in two proteolytic steps, first between Ser-23 and Phe-24, second and by a different protease, to yield the mature protein.

The protein localises to the mitochondrion inner membrane. It carries out the reaction heme b + 2 H(+) = protoporphyrin IX + Fe(2+). It functions in the pathway porphyrin-containing compound metabolism; protoheme biosynthesis; protoheme from protoporphyrin-IX: step 1/1. Its function is as follows. Catalyzes the ferrous insertion into protoporphyrin IX. The protein is Ferrochelatase, mitochondrial (HEM15) of Saccharomyces cerevisiae (strain ATCC 204508 / S288c) (Baker's yeast).